The sequence spans 45 residues: Large ribosomal subunit protein bL34 (45 aa).

The segment at M1 to T27 is disordered. Positions S10–T27 are enriched in basic residues.

The protein belongs to the bacterial ribosomal protein bL34 family.

This Prochlorococcus marinus (strain MIT 9211) protein is Large ribosomal subunit protein bL34.